A 650-amino-acid polypeptide reads, in one-letter code: Glycoprotein 105 (650 aa).

The helical; Signal-anchor for type II membrane protein transmembrane segment at 1 to 32 (MATARLGVMRPPRSCALIFLCAFSMATAPTNA) threads the bilayer. The Virion surface segment spans residues 33–650 (TAHRRAGTVK…RFPHVGIGSY (618 aa)). 8 N-linked (GlcNAc...) asparagine; by host glycosylation sites follow: asparagine 52, asparagine 290, asparagine 332, asparagine 338, asparagine 359, asparagine 422, asparagine 516, and asparagine 552.

As to quaternary structure, associates with the gp82-gp105 complex. Post-translationally, N-Glycosylated.

It is found in the virion membrane. The protein is Glycoprotein 105 (U96/U97/U98/U99/U100) of Homo sapiens (Human).